The sequence spans 548 residues: Tyrosine-protein phosphatase non-receptor type 61F (548 aa).

Over 1–525 (MSEQKTSGSG…KQLAAKKRRS (525 aa)) the chain is Cytoplasmic. One can recognise a Tyrosine-protein phosphatase domain in the interval 33-296 (FYKEICETCD…DFSYQAIIEG (264 aa)). Positions 46–65 (KEKQFSTSESERHTNRGLNR) are disordered. Phosphoserine is present on Ser83. Position 86 is a phosphotyrosine (Tyr86). Substrate contacts are provided by residues Asp203, 237–243 (CSAGIGR), and Gln281. The active-site Phosphocysteine intermediate is Cys237. Short sequence motifs (PXXP motif (SH3-binding)) lie at residues 327–330 (PPLP), 339–342 (PLAP), and 394–397 (PPLP). Positions 386 to 517 (EVADSRPLPP…RKQRENEDKQ (132 aa)) are disordered. A compositionally biased stretch (acidic residues) spans 404–428 (SDSDEDYLLDDDDEDDTDEDEEYET). Short sequence motifs (PXXP motif (SH3-binding)) lie at residues 459 to 462 (PAVP) and 480 to 483 (PASP). A compositionally biased stretch (basic and acidic residues) spans 502-517 (KVNDMKRKQRENEDKQ). The helical transmembrane segment at 526–545 (LLTYIAAGVVVGVICAYAYT) threads the bilayer. The Extracellular segment spans residues 546-548 (KLG).

Belongs to the protein-tyrosine phosphatase family. Non-receptor class 1 subfamily. In terms of assembly, interacts (via C-terminus) with dock/dreadlocks; this interaction is independent of insulin stimulation and is required for dephosphorylation of the insulin-like receptor InR.

It localises to the cytoplasm. It is found in the membrane. Its subcellular location is the endomembrane system. The protein resides in the nucleus. It catalyses the reaction O-phospho-L-tyrosyl-[protein] + H2O = L-tyrosyl-[protein] + phosphate. Functionally, non-receptor protein tyrosine phosphatase. Required for maintaining dock/dreadlocks in its non-phosphorylated state. Negative regulator of InR/insulin-like receptor signaling through dephosphorylation of tyrosines when recruited by dock/dreadlocks. This is Tyrosine-protein phosphatase non-receptor type 61F from Drosophila melanogaster (Fruit fly).